The chain runs to 23 residues: Augerpeptide hhe7a (23 aa).

3 disulfide bridges follow: C3–C11, C6–C19, and C10–C22.

Expressed by the venom duct.

Its subcellular location is the secreted. Causes abnormal twist followed by immobility when injected into C.elegans. This chain is Augerpeptide hhe7a, found in Hastula hectica (Sea snail).